The following is a 291-amino-acid chain: Tumor necrosis factor ligand superfamily member 10 (291 aa).

At 1 to 17 (MPSSGALKDLSFSQHFR) the chain is on the cytoplasmic side. Residues 18–38 (MMVICIVLLQVLLQAVSVAVT) traverse the membrane as a helical; Signal-anchor for type II membrane protein segment. Residues 39–291 (YMYFTNEMKQ…ASFFGAFLIN (253 aa)) lie on the Extracellular side of the membrane. Asn52 is a glycosylation site (N-linked (GlcNAc...) asparagine). The region spanning 126–290 (VAAHITGITR…EASFFGAFLI (165 aa)) is the THD domain. Residue Cys240 coordinates Zn(2+).

The protein belongs to the tumor necrosis factor family. In terms of assembly, homotrimer. One TNFSF10 homotrimer interacts with three TNFSF10A mononers. One TNFSF10 homotrimer interacts with three TNFSF10B mononers. Post-translationally, tyrosine phosphorylated by PKDCC/VLK. Widespread.

It localises to the cell membrane. The protein resides in the secreted. Functionally, cytokine that binds to TNFRSF10A/TRAILR1, TNFRSF10B/TRAILR2, TNFRSF10C/TRAILR3, TNFRSF10D/TRAILR4 and possibly also to TNFRSF11B/OPG. Induces apoptosis. Its activity may be modulated by binding to the decoy receptors TNFRSF10C/TRAILR3, TNFRSF10D/TRAILR4 and TNFRSF11B/OPG that cannot induce apoptosis. The chain is Tumor necrosis factor ligand superfamily member 10 (Tnfsf10) from Mus musculus (Mouse).